We begin with the raw amino-acid sequence, 271 residues long: Effector CFEM6 (271 aa).

Residues 1–17 form the signal peptide; that stretch reads MKYSMITLGAFAMMAVA. The CFEM domain maps to 18-111; sequence QLSSLPACGQ…LGPATAVVAS (94 aa). Intrachain disulfides connect C25-C68, C29-C63, C42-C49, and C51-C84. D46 is a heme binding site. Residue S247 is the site of GPI-anchor amidated serine attachment. Positions 248–271 are cleaved as a propeptide — removed in mature form; the sequence is SAGGARQTAFAGLAAAAGFAAIIL.

The protein belongs to the RBT5 family.

It is found in the cell membrane. The protein localises to the secreted. The protein resides in the host nucleus. It localises to the host cell membrane. Its subcellular location is the host chloroplast envelope. Appears to function during host infection, and may play a role in suppressing the host immune response. The protein is Effector CFEM6 of Marssonina brunnea f. sp. multigermtubi (strain MB_m1) (Marssonina leaf spot fungus).